The chain runs to 161 residues: Nucleotide-binding protein HCH_04620 (161 aa).

It belongs to the YajQ family.

Nucleotide-binding protein. This Hahella chejuensis (strain KCTC 2396) protein is Nucleotide-binding protein HCH_04620.